Reading from the N-terminus, the 234-residue chain is GTP-binding protein YPT52 (234 aa).

GTP-binding positions include 10–17 (GDSSVGKS), 66–70 (DTAGQ), and 111–114 (NKVG). Disordered regions lie at residues 131-151 (QETP…EEQK) and 206-234 (NRQI…SCCS). Residues 132–142 (ETPSTETSPDS) show a composition bias toward polar residues. 2 positions are modified to phosphoserine: serine 139 and serine 142. Lysine 151 participates in a covalent cross-link: Glycyl lysine isopeptide (Lys-Gly) (interchain with G-Cter in ubiquitin). Positions 217-234 (VDINLQRPSTNDPTSCCS) are enriched in polar residues. S-geranylgeranyl cysteine attachment occurs at residues cysteine 232 and cysteine 233.

The protein belongs to the small GTPase superfamily. Rab family. In terms of assembly, interacts with ROY1, YIF1, YIP3, YIP4 and YIP5.

The protein resides in the cell membrane. The protein localises to the endoplasmic reticulum. Functionally, required for transport in the endocytic pathway and for correct sorting of the vacuolar hydrolases suggesting a possible intersection of the endocytic with the vacuolar sorting pathway. May be involved in recruiting the MON1-CCZ1 complex to membranes enriched in phosphatidylinositol 3-phosphate (PtdIns[3]P) or other charged lipids, leading to recruitment of YPT7. This is GTP-binding protein YPT52 (YPT52) from Saccharomyces cerevisiae (strain ATCC 204508 / S288c) (Baker's yeast).